Reading from the N-terminus, the 447-residue chain is Interferon-induced protein 44-like (447 aa).

Residues 1 to 159 (MKVTARLTWI…PVECEIFRVD (159 aa)) enclose the TLDc domain.

The protein belongs to the IFI44 family. In terms of assembly, HA-28 antigen forms a complex with Kb MHC in BALB.B donor cells. Interacts with FKBP5; this interaction modulates IKBKB and IKBKE kinase activities. In terms of tissue distribution, expressed on cells of the hematopoietic lineage. Detected in transformed cell lines of the macrophage and B-cell lineage. Expressed in spleen and bone marrow.

It localises to the cytoplasm. Its function is as follows. Type I interferon-stimulated gene (ISG) that plays a critical role in antiviral and antibacterial activity. During bacterial infection, promotes macrophage differentiation and facilitates inflammatory cytokine secretion. Plays a role in the control of respiratory syncycial virus/RSV infection, reducing the ability of the virus to replicate. Acts as a feedback regulator of IFN responses by negatively regulating IKBKB kinase activity through interaction with FKBP5. In terms of biological role, precursor of the histocompatibility antigen HA-28 in BALB.B mice. More generally, minor histocompatibility antigens refer to immunogenic peptide which, when complexed with MHC, can generate an immune response after recognition by specific T-cells. The peptides are derived from polymorphic intracellular proteins, which are cleaved by normal pathways of antigen processing. The binding of these peptides to MHC molecules and its expression on the cell surface can stimulate T-cell responses and thereby trigger graft rejection or graft-versus-host disease (GVHD). More specifically, HA-28 minor antigen is transcribed in the BALB.B donor but not in host C57BL/6 cells. HA-28 is presented to the donor BALB.B cell surface by Kb MHC. This complex HA-28/Kb MHC elicits cytotoxic T-cell response in C57BL/6 mice immunized with BALB.B spleen cells. It induces C57BL/6 mice cells recognition and lysis by CD8 T-cell from BALB.B mice. The protein is Interferon-induced protein 44-like (Ifi44l) of Mus musculus (Mouse).